The following is a 165-amino-acid chain: Lipoprotein signal peptidase (165 aa).

4 consecutive transmembrane segments (helical) span residues 7 to 27 (FFLL…KYWI), 28 to 48 (THTM…LYHV), 61 to 81 (FSHW…FWLW), and 87 to 107 (DKAL…GNLI). Residues Asp-117 and Asp-136 contribute to the active site. A helical membrane pass occupies residues 128 to 148 (SFAIFNLADTFITLGAISILI).

It belongs to the peptidase A8 family.

Its subcellular location is the cell inner membrane. It carries out the reaction Release of signal peptides from bacterial membrane prolipoproteins. Hydrolyzes -Xaa-Yaa-Zaa-|-(S,diacylglyceryl)Cys-, in which Xaa is hydrophobic (preferably Leu), and Yaa (Ala or Ser) and Zaa (Gly or Ala) have small, neutral side chains.. It functions in the pathway protein modification; lipoprotein biosynthesis (signal peptide cleavage). Functionally, this protein specifically catalyzes the removal of signal peptides from prolipoproteins. The protein is Lipoprotein signal peptidase of Bartonella bacilliformis (strain ATCC 35685 / KC583 / Herrer 020/F12,63).